Consider the following 719-residue polypeptide: BRCA1-A complex subunit RAP80 (719 aa).

The tract at residues 1–30 (MPRRKKKVKEVSESRNLEKKDVETTSSVSV) is disordered. The tract at residues 1 to 101 (MPRRKKKVKE…SEQEAREVNS (101 aa)) is necessary for transcriptional repression. The span at 9–23 (KEVSESRNLEKKDVE) shows a compositional bias: basic and acidic residues. Residue lysine 20 forms a Glycyl lysine isopeptide (Lys-Gly) (interchain with G-Cter in SUMO2) linkage. Phosphoserine is present on serine 29. Lysine 31 is covalently cross-linked (Glycyl lysine isopeptide (Lys-Gly) (interchain with G-Cter in SUMO2)). Residues 43-68 (ISDSDGEEPKEENGLQKTKTKQSNRA) are disordered. Phosphoserine occurs at positions 44 and 46. Positions 60–78 (TKTKQSNRAKCLAKRKIAQ) match the LR motif motif. Glycyl lysine isopeptide (Lys-Gly) (interchain with G-Cter in SUMO2) cross-links involve residues lysine 75 and lysine 90. A UIM 1 domain is found at 80-99 (TEEEQFALALKMSEQEAREV). Disordered regions lie at residues 93–152 (EQEA…DSGL) and 164–205 (LFKG…DQSS). The segment at 97–103 (REVNSQE) is UIM-linker. The tract at residues 100–200 (NSQEEEEEEL…EEPVSGSSGS (101 aa)) is necessary for interaction with NR6A1 N-terminus. Serine 101 is modified (phosphoserine). Residues 105–124 (EEEELLRKAIAESLNSCRPS) enclose the UIM 2 domain. Over residues 117-130 (SLNSCRPSDASATR) the composition is skewed to polar residues. Position 140 is a phosphoserine (serine 140). A Glycyl lysine isopeptide (Lys-Gly) (interchain with G-Cter in SUMO2) cross-link involves residue lysine 188. The span at 195–205 (SGSSGSWDQSS) shows a compositional bias: low complexity. Serine 205 is subject to Phosphoserine. A Glycyl lysine isopeptide (Lys-Gly) (interchain with G-Cter in SUMO2) cross-link involves residue lysine 245. Positions 270–400 (TGGTVNYFWG…EEEPTTSHGQ (131 aa)) are AIR. The segment at 320 to 378 (FGEPVLPRPPSLIQNECGQGEQASEKNECISEDMGDEDKEERQESRASDWHSKTKDFQE) is disordered. A compositionally biased stretch (acidic residues) spans 349–358 (ISEDMGDEDK). Over residues 359-378 (EERQESRASDWHSKTKDFQE) the composition is skewed to basic and acidic residues. A Phosphoserine modification is found at serine 379. Residues lysine 382 and lysine 387 each participate in a glycyl lysine isopeptide (Lys-Gly) (interchain with G-Cter in SUMO2) cross-link. The interval 391 to 422 (EEEPTTSHGQSSQGIVEETSEEGNSVPASQSV) is disordered. The interval 400–500 (QSSQGIVEET…EVAISTFSSS (101 aa)) is necessary for interaction with NR6A1 C-terminus. Residues serine 402 and serine 419 each carry the phosphoserine modification. The span at 412–422 (EGNSVPASQSV) shows a compositional bias: polar residues. Lysine 428 is covalently cross-linked (Glycyl lysine isopeptide (Lys-Gly) (interchain with G-Cter in SUMO2)). Phosphoserine is present on serine 466. The UBZ4-type zinc finger occupies 502–529 (QVSCPLCDQCFPPTKIERHAMYCNGLME). Cysteine 505, cysteine 508, histidine 520, and cysteine 524 together coordinate Zn(2+). Positions 505 to 582 (CPLCDQCFPP…REYQCHVDSC (78 aa)) are zinc-finger-like region. Glycyl lysine isopeptide (Lys-Gly) (interchain with G-Cter in SUMO2) cross-links involve residues lysine 544, lysine 559, lysine 562, lysine 587, and lysine 607. Residues 588-668 (ADQGDGPEGS…AGCSREMQSS (81 aa)) are disordered. Residues 614–623 (NPKEKGHSEG) are compositionally biased toward basic and acidic residues. Serine 627 bears the Phosphoserine mark. Over residues 631-643 (QSEHKTSDADIKS) the composition is skewed to basic and acidic residues. Residues lysine 635 and lysine 642 each participate in a glycyl lysine isopeptide (Lys-Gly) (interchain with G-Cter in SUMO2) cross-link. Phosphoserine is present on residues serine 653 and serine 677. Residues lysine 696 and lysine 697 each participate in a glycyl lysine isopeptide (Lys-Gly) (interchain with G-Cter in SUMO2) cross-link.

The protein belongs to the RAP80 family. As to quaternary structure, component of the ARISC complex, at least composed of UIMC1/RAP80, ABRAXAS1, BRCC3/BRCC36, BABAM2 and BABAM1/NBA1. Component of the BRCA1-A complex, at least composed of the BRCA1, BARD1, UIMC1/RAP80, ABRAXAS1, BRCC3/BRCC36, BABAM2 and BABAM1/NBA1. In the BRCA1-A complex, interacts directly with ABRAXAS1. Interacts with UBE2I. Interacts with NR6A1. Interacts with ESR1. Interacts with TSP57. Interacts with TRAIP. Post-translationally, sumoylated. In terms of processing, phosphorylated upon DNA damage by ATM or ATR. In terms of tissue distribution, expressed in testis, ovary, thymus and heart. Expressed in germ cells of the testis.

The protein localises to the nucleus. Functionally, ubiquitin-binding protein. Specifically recognizes and binds 'Lys-63'-linked ubiquitin. Plays a central role in the BRCA1-A complex by specifically binding 'Lys-63'-linked ubiquitinated histones H2A and H2AX at DNA lesions sites, leading to target the BRCA1-BARD1 heterodimer to sites of DNA damage at double-strand breaks (DSBs). The BRCA1-A complex also possesses deubiquitinase activity that specifically removes 'Lys-63'-linked ubiquitin on histones H2A and H2AX. Also weakly binds monoubiquitin but with much less affinity than 'Lys-63'-linked ubiquitin. May interact with monoubiquitinated histones H2A and H2B; the relevance of such results is however unclear in vivo. Does not bind Lys-48'-linked ubiquitin. May indirectly act as a transcriptional repressor by inhibiting the interaction of NR6A1 with the corepressor NCOR1. This chain is BRCA1-A complex subunit RAP80 (UIMC1), found in Homo sapiens (Human).